The primary structure comprises 397 residues: Efflux pump periplasmic linker BepD (397 aa).

The signal sequence occupies residues 1–26 (MTLNRTIRCFAAGAAFIVFAAQPALA). Residues 98 to 139 (APYQAELEKAQAQVAQAEAQYQQSIRDAERAEQLVQQKVQSA) adopt a coiled-coil conformation.

The protein belongs to the membrane fusion protein (MFP) (TC 8.A.1) family. In terms of assembly, probably part of a tripartite efflux pump, which is composed of an outer membrane efflux protein, an inner membrane protein and a protein that expands the periplasmic space. Could form a tripartite pump with BepC and BepE.

It is found in the periplasm. In terms of biological role, involved in resistance to several unrelated toxic compounds, such as dyes, detergents and antibiotics. The chain is Efflux pump periplasmic linker BepD (bepD) from Brucella suis biovar 1 (strain 1330).